Here is a 139-residue protein sequence, read N- to C-terminus: Acyl carrier protein 5, chloroplastic (139 aa).

The transit peptide at 1-54 (MATSFCSSISMQAPFSATTTRFCLNKQATIFNNEKTNNLSFSLRRLMPARLAVS) directs the protein to the chloroplast. In terms of domain architecture, Carrier spans 59–134 (QETVEKVSEI…QAAELIEELV (76 aa)). Position 94 is an O-(pantetheine 4'-phosphoryl)serine (serine 94).

The protein belongs to the acyl carrier protein (ACP) family. Post-translationally, 4'-phosphopantetheine is transferred from CoA to a specific serine of apo-ACP by acpS. This modification is essential for activity because fatty acids are bound in thioester linkage to the sulfhydryl of the prosthetic group.

It is found in the plastid. The protein resides in the chloroplast. Functionally, carrier of the growing fatty acid chain in fatty acid biosynthesis. In Arabidopsis thaliana (Mouse-ear cress), this protein is Acyl carrier protein 5, chloroplastic (ACP5).